Consider the following 669-residue polypeptide: Methionine--tRNA ligase (669 aa).

The 'HIGH' region motif lies at 15-25 (PYANGPAHIGH). The Zn(2+) site is built by C146, C149, C158, and C162. Residues 328–332 (KFSKS) carry the 'KMSKS' region motif. K331 is an ATP binding site. The region spanning 570-669 (QFKALDLRVG…KEVPAGCGIR (100 aa)) is the tRNA-binding domain.

It belongs to the class-I aminoacyl-tRNA synthetase family. MetG type 1 subfamily. In terms of assembly, homodimer. Zn(2+) serves as cofactor.

It is found in the cytoplasm. It catalyses the reaction tRNA(Met) + L-methionine + ATP = L-methionyl-tRNA(Met) + AMP + diphosphate. Its function is as follows. Is required not only for elongation of protein synthesis but also for the initiation of all mRNA translation through initiator tRNA(fMet) aminoacylation. This Methanothrix thermoacetophila (strain DSM 6194 / JCM 14653 / NBRC 101360 / PT) (Methanosaeta thermophila) protein is Methionine--tRNA ligase.